The chain runs to 216 residues: Phosphatidylserine decarboxylase proenzyme (216 aa).

Ser-182 acts as the Schiff-base intermediate with substrate; via pyruvic acid in catalysis. A Pyruvic acid (Ser); by autocatalysis modification is found at Ser-182.

Belongs to the phosphatidylserine decarboxylase family. PSD-A subfamily. Heterodimer of a large membrane-associated beta subunit and a small pyruvoyl-containing alpha subunit. Pyruvate is required as a cofactor. In terms of processing, is synthesized initially as an inactive proenzyme. Formation of the active enzyme involves a self-maturation process in which the active site pyruvoyl group is generated from an internal serine residue via an autocatalytic post-translational modification. Two non-identical subunits are generated from the proenzyme in this reaction, and the pyruvate is formed at the N-terminus of the alpha chain, which is derived from the carboxyl end of the proenzyme. The post-translation cleavage follows an unusual pathway, termed non-hydrolytic serinolysis, in which the side chain hydroxyl group of the serine supplies its oxygen atom to form the C-terminus of the beta chain, while the remainder of the serine residue undergoes an oxidative deamination to produce ammonia and the pyruvoyl prosthetic group on the alpha chain.

It is found in the cell membrane. The catalysed reaction is a 1,2-diacyl-sn-glycero-3-phospho-L-serine + H(+) = a 1,2-diacyl-sn-glycero-3-phosphoethanolamine + CO2. The protein operates within phospholipid metabolism; phosphatidylethanolamine biosynthesis; phosphatidylethanolamine from CDP-diacylglycerol: step 2/2. Catalyzes the formation of phosphatidylethanolamine (PtdEtn) from phosphatidylserine (PtdSer). This is Phosphatidylserine decarboxylase proenzyme from Burkholderia mallei (strain NCTC 10247).